A 432-amino-acid chain; its full sequence is Solute carrier family 38 member 8 (432 aa).

11 consecutive transmembrane segments (helical) span residues 29 to 49 (AVFI…PWAF), 59 to 79 (FLVA…LGYA), 103 to 123 (LCEI…LRVI), 144 to 164 (AAQN…LSAL), 175 to 195 (ILGT…YYLW), 215 to 237 (VFSV…SIYC), 253 to 273 (LSLL…FLTF), 292 to 312 (IIVA…IVLF), 345 to 365 (LPLT…LPDL), 368 to 388 (IISI…GLCL), and 409 to 429 (GILS…VAMV).

This sequence belongs to the amino acid/polyamine transporter 2 family. Expressed in neurons located in the gray matter. Highly expressed in thalamus, hypothalamus, amygdala and pons. Expressed in the CA3 area of hippocampus and in the Purkinje layer of the cerebellum (at protein level). Expressed in the eye.

It localises to the membrane. It is found in the cytoplasm. Its subcellular location is the cell cortex. The protein localises to the cell projection. The protein resides in the axon. The catalysed reaction is L-glutamine(out) = L-glutamine(in). It carries out the reaction L-alanine(in) = L-alanine(out). It catalyses the reaction L-histidine(out) = L-histidine(in). The enzyme catalyses L-aspartate(out) = L-aspartate(in). The catalysed reaction is L-arginine(in) = L-arginine(out). It carries out the reaction L-leucine(in) = L-leucine(out). Electrogenic sodium-dependent amino acid transporter with a preference for L-glutamine, L-alanine, L-histidine, L-aspartate and L-arginine. May facilitate glutamine uptake in both excitatory and inhibitory neurons. The transport mechanism and stoichiometry remain to be elucidated. This chain is Solute carrier family 38 member 8, found in Mus musculus (Mouse).